Reading from the N-terminus, the 489-residue chain is Betaine aldehyde dehydrogenase (489 aa).

K(+)-binding residues include threonine 26 and aspartate 93. 150–152 contributes to the NAD(+) binding site; that stretch reads GAW. Lysine 162 serves as the catalytic Charge relay system. An NAD(+)-binding site is contributed by 176–179; sequence KPSE. Valine 180 contributes to the K(+) binding site. 229-232 is a binding site for NAD(+); it reads GVET. Leucine 245 contacts K(+). Glutamate 251 serves as the catalytic Proton acceptor. Glycine 253, cysteine 285, and glutamate 386 together coordinate NAD(+). The active-site Nucleophile is the cysteine 285. Cysteine 285 carries the post-translational modification Cysteine sulfenic acid (-SOH). Residues lysine 456 and glycine 459 each contribute to the K(+) site. Glutamate 463 (charge relay system) is an active-site residue.

Belongs to the aldehyde dehydrogenase family. Dimer of dimers. It depends on K(+) as a cofactor.

The enzyme catalyses betaine aldehyde + NAD(+) + H2O = glycine betaine + NADH + 2 H(+). Its pathway is amine and polyamine biosynthesis; betaine biosynthesis via choline pathway; betaine from betaine aldehyde: step 1/1. Functionally, involved in the biosynthesis of the osmoprotectant glycine betaine. Catalyzes the irreversible oxidation of betaine aldehyde to the corresponding acid. This Burkholderia multivorans (strain ATCC 17616 / 249) protein is Betaine aldehyde dehydrogenase.